The following is a 262-amino-acid chain: Apolipoprotein A-I (262 aa).

The signal sequence occupies residues 1 to 18 (MKFLALALTILLAAATQA). Positions 32–63 (VKVAMMEYMAQVKETGQRSIDLLDDTEFKEYK) are 3 X approximate tandem repeats. A run of 2 repeats spans residues 64-85 (VQLS…QSLA) and 87-107 (YSEA…AEVM). Residues 64–262 (VQLSQSLDNL…YETISQAMKA (199 aa)) are 10 X approximate tandem repeats. The 3; half-length repeat unit spans residues 108 to 118 (KDVEDVRTQLE). A run of 5 repeats spans residues 119-140 (PKRA…KKLE), 141-162 (PLIK…VKME), 163-184 (PVVE…AKLM), 185-206 (PIVE…TLAA), and 207-228 (PYAE…EKVG). Residues 229-239 (PLTNDFKGQVG) form a 9; half-length repeat. Copy 10 of the repeat occupies 240–262 (PAAEQAKEKLMDFYETISQAMKA).

This sequence belongs to the apolipoprotein A1/A4/E family.

It localises to the secreted. Functionally, participates in the reverse transport of cholesterol from tissues to the liver for excretion by promoting cholesterol efflux from tissues and by acting as a cofactor for the lecithin cholesterol acyltransferase (LCAT). This is Apolipoprotein A-I (apoa1) from Salmo trutta (Brown trout).